The following is a 492-amino-acid chain: Glutamyl-tRNA(Gln) amidotransferase subunit A (492 aa).

Residues K79 and S154 each act as charge relay system in the active site. S178 acts as the Acyl-ester intermediate in catalysis.

The protein belongs to the amidase family. GatA subfamily. In terms of assembly, heterotrimer of A, B and C subunits.

The enzyme catalyses L-glutamyl-tRNA(Gln) + L-glutamine + ATP + H2O = L-glutaminyl-tRNA(Gln) + L-glutamate + ADP + phosphate + H(+). In terms of biological role, allows the formation of correctly charged Gln-tRNA(Gln) through the transamidation of misacylated Glu-tRNA(Gln) in organisms which lack glutaminyl-tRNA synthetase. The reaction takes place in the presence of glutamine and ATP through an activated gamma-phospho-Glu-tRNA(Gln). The protein is Glutamyl-tRNA(Gln) amidotransferase subunit A (gatA) of Moraxella catarrhalis (Branhamella catarrhalis).